Consider the following 346-residue polypeptide: S-adenosylmethionine:tRNA ribosyltransferase-isomerase (346 aa).

This sequence belongs to the QueA family. In terms of assembly, monomer.

The protein resides in the cytoplasm. The catalysed reaction is 7-aminomethyl-7-carbaguanosine(34) in tRNA + S-adenosyl-L-methionine = epoxyqueuosine(34) in tRNA + adenine + L-methionine + 2 H(+). It participates in tRNA modification; tRNA-queuosine biosynthesis. Functionally, transfers and isomerizes the ribose moiety from AdoMet to the 7-aminomethyl group of 7-deazaguanine (preQ1-tRNA) to give epoxyqueuosine (oQ-tRNA). The polypeptide is S-adenosylmethionine:tRNA ribosyltransferase-isomerase (Lysinibacillus sphaericus (strain C3-41)).